The following is a 357-amino-acid chain: Fructose-bisphosphate aldolase, cytoplasmic isozyme (357 aa).

Arginine 53 and lysine 142 together coordinate substrate. Glutamate 183 functions as the Proton acceptor in the catalytic mechanism. Residue lysine 225 is the Schiff-base intermediate with dihydroxyacetone-P of the active site.

Belongs to the class I fructose-bisphosphate aldolase family.

It is found in the cytoplasm. The catalysed reaction is beta-D-fructose 1,6-bisphosphate = D-glyceraldehyde 3-phosphate + dihydroxyacetone phosphate. It functions in the pathway carbohydrate degradation; glycolysis; D-glyceraldehyde 3-phosphate and glycerone phosphate from D-glucose: step 4/4. The sequence is that of Fructose-bisphosphate aldolase, cytoplasmic isozyme from Spinacia oleracea (Spinach).